A 639-amino-acid chain; its full sequence is UvrABC system protein C (639 aa).

One can recognise a GIY-YIG domain in the interval 20–97 (ERSGVYRMFD…IKKFQPKFNI (78 aa)). One can recognise a UVR domain in the interval 207 to 242 (KELQENLSRKMEELSSQMRFEEAAEIRDRIKALSYV).

The protein belongs to the UvrC family. As to quaternary structure, interacts with UvrB in an incision complex.

Its subcellular location is the cytoplasm. Its function is as follows. The UvrABC repair system catalyzes the recognition and processing of DNA lesions. UvrC both incises the 5' and 3' sides of the lesion. The N-terminal half is responsible for the 3' incision and the C-terminal half is responsible for the 5' incision. The protein is UvrABC system protein C of Rickettsia peacockii (strain Rustic).